Consider the following 1113-residue polypeptide: Protein MGA2 (1113 aa).

Positions 91–114 are disordered; that stretch reads TPLEEEMESNRALKEEEEDEHENK. A Phosphoserine modification is found at Ser255. Composition is skewed to polar residues over residues 344–357 and 437–452; these read DTTK…SSRR and HIPS…SESF. Disordered regions lie at residues 344 to 376 and 437 to 462; these read DTTK…NNQL and HIPS…NDNP. Ser467 is subject to Phosphoserine. Residues 530-610 enclose the IPT/TIG domain; the sequence is PSINRVIPSQ…NENNNDDLPQ (81 aa). The disordered stretch occupies residues 658-687; that stretch reads IVGNDSPDSGTNGNSCSKSTGPSPNQHSMN. The segment covering 663–687 has biased composition (polar residues); it reads SPDSGTNGNSCSKSTGPSPNQHSMN. ANK repeat units lie at residues 719–748 and 752–781; these read LGRT…RVND and FGLT…NYSL. Residues 1037 to 1054 form a helical membrane-spanning segment; the sequence is MLIFFWIPLTLLLLTWFI.

The protein resides in the membrane. This is Protein MGA2 (MGA2) from Saccharomyces cerevisiae (strain ATCC 204508 / S288c) (Baker's yeast).